Consider the following 440-residue polypeptide: MKHFRDLDLSSYSLSSVSGFLPERPALERLPNPYYDHWEDLSRNLPQLVASDTLKDKLERLPILSTALLDSEEEWRRAYVVLSFLSQGYIWSGDQPRRNLPIAIAAPLRRVSEYLTIMPCGTFAAYCLWNVIPSPKFGNPQINPEDFISTCTFTGSKEEEWFYVISVAIEARGGRLIPKILDAIDAVKENDTPRVRSFLEAFITCVDGIILVLDRMGENLSQEFFYHRLRPYLRGGKNMAQVGLPDGIFYPLCQCEGGEGEWLAYSGGSNAQSSLIQLMDITLGTCQNVEFIKEMRNYMPGPHREFLELMTSVSNIRPYILSLGNDSDVRSLYDKAVLRLAALRDCHLRVVARYILIPAGKKNPSGHRQLQERGRGTGGTDIMKFLRETRNNTLSACCEQSKGSTVVQTYPKRCETCGSGPIDRTTLIKKATVVINEIEC.

Residue histidine 347 coordinates heme.

This sequence belongs to the indoleamine 2,3-dioxygenase family. As to quaternary structure, monomer. Heme is required as a cofactor.

The enzyme catalyses D-tryptophan + O2 = N-formyl-D-kynurenine. The catalysed reaction is L-tryptophan + O2 = N-formyl-L-kynurenine. It functions in the pathway secondary metabolite biosynthesis. Indoleamine 2,3-dioxygenase; part of the gene cluster that mediates the biosynthesis of quinolactacin A2 (QUL A2), a fungal alkaloid that features a quinolone-gamma-lactam hybrid, which is a potential pharmacophore for the treatment of cancer and Alzheimer's disease. The quinolone-gamma-lactam hybrid scaffold is synthesized from the combination of L-isoleucine (L-Ile) and the nonproteinogenic amino acid L-kynurenine, followed by quinolone cyclization, oxidative decarboxylation, and lactam formation. Additionally, the N-methyl group is derived from methionine, which might be catalyzed by an S-adenosylmethionine (SAM)-dependent methyltransferase. Bioconversion of L-tryptophan to L-kynurenine could be catalyzed by the indoleamine-2,3-dioxygenase (IDO) qulI to produce an unstable product, N-formyl-L-kynurenine, followed by kynurenine formamidase catalyzed hydrolysis. QulM then acts as a methyltransferase that methylates L-kynurenine at the N-4 position. The FMN-dependent alpha-hydroxy acid dehydrogenase qulF than functions as an oxidative decarboxylase which converts N-methylkynurenine into 2-aminobenzoylacetamide via 2 tandem reactions, including dehydrogenation and decarboxylation. An amidase located outside of the qul gene cluster further produces the unstable beta-keto acid precursor N-methyl-2-aminobenzoylacetate, which could be spontaneously dehydrated to form N-methyl-4-hydroxy-2-quinolone. The NRPS qulB is able to incorporate N-methyl-2-aminobenzoylacetate and efficiently compete with the spontaneous reaction. By further extending the beta-keto acid with L-Ile, qulA performs a Dieckmann condensation to form the gamma-lactam ring and release a 4-ketopyrrolidinone intermediate from the assembly line. This intermediate could plausibly further undergo a spontaneous cyclization to yield the final quinolone-gamma-lactam hybrid structure. The sequence is that of Indoleamine 2,3-dioxygenase qulI from Penicillium citrinum.